We begin with the raw amino-acid sequence, 401 residues long: Chorismate synthase (401 aa).

NADP(+) is bound by residues Arg-40 and Arg-46. FMN contacts are provided by residues 135-137, 256-257, Gly-302, 317-321, and Arg-343; these read RAS, QA, and KPISS.

This sequence belongs to the chorismate synthase family. As to quaternary structure, homotetramer. Requires FMNH2 as cofactor.

The enzyme catalyses 5-O-(1-carboxyvinyl)-3-phosphoshikimate = chorismate + phosphate. It functions in the pathway metabolic intermediate biosynthesis; chorismate biosynthesis; chorismate from D-erythrose 4-phosphate and phosphoenolpyruvate: step 7/7. Its function is as follows. Catalyzes the anti-1,4-elimination of the C-3 phosphate and the C-6 proR hydrogen from 5-enolpyruvylshikimate-3-phosphate (EPSP) to yield chorismate, which is the branch point compound that serves as the starting substrate for the three terminal pathways of aromatic amino acid biosynthesis. This reaction introduces a second double bond into the aromatic ring system. The sequence is that of Chorismate synthase from Saccharopolyspora erythraea (strain ATCC 11635 / DSM 40517 / JCM 4748 / NBRC 13426 / NCIMB 8594 / NRRL 2338).